Consider the following 416-residue polypeptide: Keratin, type I cuticular Ha1 (416 aa).

A head region spans residues 1–56 (MPYNFCLPSLSCRTSCSSRPCVPPSCHSCTLPGACNIPANVSNCNWFCEGSFNGSE). The region spanning 56 to 367 (EKETMQFLND…SLLESEDCNL (312 aa)) is the IF rod domain. The tract at residues 57–91 (KETMQFLNDRLASYLEKVRQLERDNAELENLIRER) is coil 1A. The interval 92–102 (SQQQEPLLCPS) is linker 1. Residues 103 to 203 (YQSYFKTIEE…HEQEVNTLRC (101 aa)) form a coil 1B region. The segment at 204–219 (QLGDRLNVEVDAAPTV) is linker 12. The coil 2 stretch occupies residues 220–363 (DLNRVLNETR…NTYRSLLESE (144 aa)). The interval 364–416 (DCNLPSNPCATTNACSKPIGPCLSNPCTPCVPPAPCTPCAPRPRCGPCNSFVR) is tail.

This sequence belongs to the intermediate filament family.

This is Keratin, type I cuticular Ha1 (KRT31) from Pan troglodytes (Chimpanzee).